The primary structure comprises 451 residues: 2-succinylbenzoate--CoA ligase (451 aa).

It belongs to the ATP-dependent AMP-binding enzyme family. MenE subfamily.

It catalyses the reaction 2-succinylbenzoate + ATP + CoA = 2-succinylbenzoyl-CoA + AMP + diphosphate. The protein operates within quinol/quinone metabolism; 1,4-dihydroxy-2-naphthoate biosynthesis; 1,4-dihydroxy-2-naphthoate from chorismate: step 5/7. It functions in the pathway quinol/quinone metabolism; menaquinone biosynthesis. In terms of biological role, converts 2-succinylbenzoate (OSB) to 2-succinylbenzoyl-CoA (OSB-CoA). The chain is 2-succinylbenzoate--CoA ligase from Escherichia coli (strain K12).